A 900-amino-acid chain; its full sequence is MGHTSYAVVDLETTGNQLDYDEIIQIGITFVSNNKISGTYHSMIRTDLDIPPFIQALTSIEDTMLEQAPYFHEIAQEIYKQLKDRVFVAHNVDFDLNFIKKAFQNCNIDFKPKKVLDTLELFKIAYPTDKSYQLSELAEAHDIPLDNAHRADEDATTTALLMIKAFQKFEQLPIDTLKQLYYLSKNLKYDLFNVLFEMVRQHENSPLDNQYGQFEQIIYKKQIDLKAPKTSFNGSLKDLYSEVVKSLNLTYRPQQLYLSEIILEQLMHNDKAMIEAPLGSGKSLAYLLAALMYNIETGRHVMISTNTKLLQNQLLLKDIPSINQALNFKINATLIKSKSEYISLGLISQILKDETTNYEVNILKMQLLTWIIETETGDIQDLNLKGGQKMYFDQKIETYVPVRHDMHYYNYIKRNAHHIQIGITNHAHLIHSDQENSIYQLFDDCIIDEAHRLPDYALNQVTNDLDYSDLKYQLGLIGKNENEKLLKAIDKLEQQRILERLDIAPIDVFGLKMNISEIHDLNERLFNHIFEIIQNSDVYDDDIHRHHYVFEFDSTQILKDLHLIVDKINKTLEIFNGMTHKTIKTLRKQLLYINDTYRNIEQSLKDKHTAYLSIRNLTQKSTIKLIVKDYAVRDILTTRVLDKFNSLTFISGTLTFNHKFDAFKNWFKEDVHFNTYQVPSTLSNHANTNVYIPSDVSSYNFKNIDDYVASIVDYIQEYVTITDSKCLVLFTSYRMMHMVQELLNELPTFEDYVVLTQQQNQNYKIVQQFNNFDKTILLGTSTFFEGFDYQAKGIKCVMIAKLPFMNKYNTKHWLMDSEFDSTFKDYVLPDAVTRFRQGLGRLIRNEDDQGLIVSFDDRLVSSNYKNFFAQTLENYKQKKGDIKQFSKLVNKIQHNIDANK.

The 154-residue stretch at 8–161 (VVDLETTGNQ…DEDATTTALL (154 aa)) folds into the Exonuclease domain. The 256-residue stretch at 241–496 (SEVVKSLNLT…KAIDKLEQQR (256 aa)) folds into the Helicase ATP-binding domain. 276-283 (APLGSGKS) contributes to the ATP binding site. The short motif at 448-451 (DEAH) is the DEAH box element. In terms of domain architecture, Helicase C-terminal spans 713–893 (DYIQEYVTIT…QFSKLVNKIQ (181 aa)).

The protein belongs to the helicase family. DinG subfamily. Type 2 sub-subfamily.

In terms of biological role, 3'-5' exonuclease. The protein is 3'-5' exonuclease DinG of Staphylococcus haemolyticus (strain JCSC1435).